The primary structure comprises 220 residues: dITP/XTP pyrophosphatase (220 aa).

13-18 (SHNAGK) lines the substrate pocket. Residues D45 and D74 each contribute to the Mg(2+) site. D74 functions as the Proton acceptor in the catalytic mechanism. Residues S75, 163 to 166 (FGYD), K186, and 199 to 200 (HR) each bind substrate.

Belongs to the HAM1 NTPase family. Homodimer. Mg(2+) serves as cofactor.

It carries out the reaction XTP + H2O = XMP + diphosphate + H(+). It catalyses the reaction dITP + H2O = dIMP + diphosphate + H(+). The catalysed reaction is ITP + H2O = IMP + diphosphate + H(+). Its function is as follows. Pyrophosphatase that catalyzes the hydrolysis of nucleoside triphosphates to their monophosphate derivatives, with a high preference for the non-canonical purine nucleotides XTP (xanthosine triphosphate), dITP (deoxyinosine triphosphate) and ITP. Seems to function as a house-cleaning enzyme that removes non-canonical purine nucleotides from the nucleotide pool, thus preventing their incorporation into DNA/RNA and avoiding chromosomal lesions. This Mesorhizobium japonicum (strain LMG 29417 / CECT 9101 / MAFF 303099) (Mesorhizobium loti (strain MAFF 303099)) protein is dITP/XTP pyrophosphatase.